The primary structure comprises 242 residues: Type III pantothenate kinase (242 aa).

7-14 (DLGNSRFK) serves as a coordination point for ATP. Substrate-binding positions include Y91 and 98–101 (GVDR). The Proton acceptor role is filled by D100. An ATP-binding site is contributed by T121. T171 contacts substrate.

The protein belongs to the type III pantothenate kinase family. As to quaternary structure, homodimer. NH4(+) serves as cofactor. The cofactor is K(+).

It localises to the cytoplasm. It carries out the reaction (R)-pantothenate + ATP = (R)-4'-phosphopantothenate + ADP + H(+). The protein operates within cofactor biosynthesis; coenzyme A biosynthesis; CoA from (R)-pantothenate: step 1/5. In terms of biological role, catalyzes the phosphorylation of pantothenate (Pan), the first step in CoA biosynthesis. The protein is Type III pantothenate kinase of Xanthomonas campestris pv. campestris (strain 8004).